The primary structure comprises 285 residues: SLAM family member 9 (285 aa).

The N-terminal stretch at M1 to G17 is a signal peptide. The Extracellular segment spans residues F18 to L232. The Ig-like V-type domain maps to P25 to R126. 6 N-linked (GlcNAc...) asparagine glycosylation sites follow: N37, N97, N141, N149, N175, and N206. The region spanning P134–S213 is the Ig-like C2-type domain. C154 and C198 form a disulfide bridge. Residues L233–F253 traverse the membrane as a helical segment. The Cytoplasmic portion of the chain corresponds to R254–V285.

It is found in the membrane. Functionally, may play a role in the immune response. The protein is SLAM family member 9 (Slamf9) of Mus musculus (Mouse).